The following is an 83-amino-acid chain: Small ribosomal subunit protein bS20 (83 aa).

It belongs to the bacterial ribosomal protein bS20 family.

Binds directly to 16S ribosomal RNA. The protein is Small ribosomal subunit protein bS20 of Flavobacterium psychrophilum (strain ATCC 49511 / DSM 21280 / CIP 103535 / JIP02/86).